Reading from the N-terminus, the 1051-residue chain is Putative helicase/primase complex protein (1051 aa).

This sequence belongs to the asfivirus F1055L family.

Functionally, may be involved in DNA replication. The sequence is that of Putative helicase/primase complex protein from Ornithodoros (relapsing fever ticks).